The chain runs to 200 residues: Claudin-11 (200 aa).

Met-1 is a topological domain (cytoplasmic). A helical membrane pass occupies residues 2–22; sequence VATCLQVVGFVTSFVGWIGVI. Residues 23–75 are Extracellular-facing; sequence VTTSTNDWVVTCGYTIPTCRKLDELGSKGLWADCVMATGLYHCKPLVDILPCR. The chain crosses the membrane as a helical span at residues 76–96; sequence ALMIAASVLGLPAILLLLTVL. The Cytoplasmic portion of the chain corresponds to 97–115; sequence PCIRMGQEPGVAKYRRAQL. The helical transmembrane segment at 116-136 threads the bilayer; it reads AGVLLILLALCAIVATIWFPV. Residues 137-150 are Extracellular-facing; sequence CAHRETTIVSFGYS. The helical transmembrane segment at 151-171 threads the bilayer; that stretch reads LYAGWIGAVLCLVGGCVILCC. Residues 172–200 are Cytoplasmic-facing; that stretch reads AGDAQAFGENRFYYTAGSSSPTHAKSAHV. Residues Ser-190 and Ser-191 each carry the phosphoserine modification.

The protein belongs to the claudin family. Interacts with tetraspanin-3/TSPAN3. Interacts with OCLN.

The protein resides in the cell junction. It localises to the tight junction. The protein localises to the cell membrane. Its function is as follows. Plays a major role in tight junction-specific obliteration of the intercellular space, through calcium-independent cell-adhesion activity. The polypeptide is Claudin-11 (CLDN11) (Pongo abelii (Sumatran orangutan)).